A 510-amino-acid polypeptide reads, in one-letter code: Inner membrane protein YeeR (510 aa).

A topological domain (cytoplasmic) is located at residue M1. A helical membrane pass occupies residues 2–22; sequence LQIVGALILLIAGFAILRLLF. Topologically, residues 23–30 are periplasmic; sequence RALISTAS. A helical transmembrane segment spans residues 31–51; that stretch reads ALAGLILLCLFGPALLAGYIT. The Cytoplasmic portion of the chain corresponds to 52 to 61; that stretch reads ERITRLFHIR. Residues 62 to 82 form a helical membrane-spanning segment; that stretch reads WLAGVFLTIAGMIISFMWGLD. The Periplasmic segment spans residues 83-94; sequence GKHIALEAHTFD. The helical transmembrane segment at 95 to 115 threads the bilayer; that stretch reads SVKFILTTALAGGLLAVPLQI. Over 116-136 the chain is Cytoplasmic; sequence KNIQQNGITPEDISKEINGYY. A helical membrane pass occupies residues 137–157; sequence CCFYTAFFLMACSACAPLIAL. The Periplasmic segment spans residues 158–164; the sequence is QYDISPS. The chain crosses the membrane as a helical span at residues 165 to 185; sequence LMWWGGLLYWLAALVTLLWAA. Topologically, residues 186-510 are cytoplasmic; it reads SQIQALKKLT…KIREGKVEER (325 aa).

The protein localises to the cell inner membrane. This chain is Inner membrane protein YeeR (yeeR), found in Escherichia coli (strain K12).